We begin with the raw amino-acid sequence, 637 residues long: Sodium-dependent phosphate transport protein 2A (637 aa).

Residues 1–103 are Cytoplasmic-facing; the sequence is MMSYSERLGG…LAQVGTKLLK (103 aa). A phosphoserine mark is found at S14 and S34. The chain crosses the membrane as a helical span at residues 104–125; it reads VPLMLAFLYLFVCSLDVLSSAF. The Extracellular portion of the chain corresponds to 126-145; it reads QLAGGKVAGDIFKDNAILSN. A helical membrane pass occupies residues 146–163; the sequence is PVAGLVVGILVTVLVQSS. Residues 164 to 165 are Cytoplasmic-facing; the sequence is ST. The chain crosses the membrane as a helical span at residues 166–185; the sequence is STSIIVSMVSSGLLEVSSAI. Residues 186 to 345 are Extracellular-facing; the sequence is PIIMGSNIGT…HIFVDTGLPD (160 aa). Cystine bridges form between C225-C520 and C306-C334. N298 and N328 each carry an N-linked (GlcNAc...) asparagine glycan. The chain crosses the membrane as a helical span at residues 346 to 368; sequence LAVGLILLAGSLVVLCTCLILLV. Residues 369 to 410 are Cytoplasmic-facing; the sequence is KMLNSLLKGQVMSSRRSSTQTDFPAPFTWVTGYFAMVVGASM. The chain crosses the membrane as a helical span at residues 411-434; that stretch reads TFVVQSSSVFTSAITPLIGLGVIS. Over 435–464 the chain is Extracellular; it reads IERAYPLTLGSNIGTTTTAILAALASPREK. Residues 465 to 485 form a helical membrane-spanning segment; it reads LSSSFQIALCHFFFNISGILL. Residues 486–511 lie on the Cytoplasmic side of the membrane; the sequence is WYPLPCTRLPIRMAKALGKRTAKYRW. Position 506 is a phosphothreonine; by PKC (T506). The helical transmembrane segment at 512–532 threads the bilayer; that stretch reads FAVLYLLVCFLLLPSLVFGIS. Residues 533-537 are Extracellular-facing; that stretch reads MAGWQ. A helical transmembrane segment spans residues 538 to 559; sequence AMVGVGTPFGALLAFVVLVNVL. The Cytoplasmic segment spans residues 560–637; the sequence is QSRSPGHLPK…LPAHHNATRL (78 aa). Phosphoserine is present on S605. At T621 the chain carries Phosphothreonine. S623 bears the Phosphoserine mark.

The protein belongs to the SLC34A transporter family. Interacts via its C-terminal region with NHERF4. Interacts with NHERF1. Interacts with TMEM174; regulates SLC34A1 internalization by PTH and FGF23. In terms of tissue distribution, kidney.

Its subcellular location is the apical cell membrane. It is found in the cell membrane. The catalysed reaction is 3 Na(+)(out) + phosphate(out) = 3 Na(+)(in) + phosphate(in). Functionally, involved in actively transporting phosphate into cells via Na(+) cotransport in the renal brush border membrane. The cotransport has a Na(+):Pi stoichiometry of 3:1 and is electrogenic. The protein is Sodium-dependent phosphate transport protein 2A of Mus musculus (Mouse).